The following is a 219-amino-acid chain: Orotate phosphoribosyltransferase (219 aa).

A 5-phospho-alpha-D-ribose 1-diphosphate-binding site is contributed by Lys26. 34–35 provides a ligand contact to orotate; it reads FF. 5-phospho-alpha-D-ribose 1-diphosphate is bound by residues 72 to 73, Arg98, Lys99, Lys102, His104, and 124 to 132; these read YK and DDVITAGTA. 2 residues coordinate orotate: Thr128 and Arg156.

This sequence belongs to the purine/pyrimidine phosphoribosyltransferase family. PyrE subfamily. As to quaternary structure, homodimer. Requires Mg(2+) as cofactor.

The enzyme catalyses orotidine 5'-phosphate + diphosphate = orotate + 5-phospho-alpha-D-ribose 1-diphosphate. Its pathway is pyrimidine metabolism; UMP biosynthesis via de novo pathway; UMP from orotate: step 1/2. In terms of biological role, catalyzes the transfer of a ribosyl phosphate group from 5-phosphoribose 1-diphosphate to orotate, leading to the formation of orotidine monophosphate (OMP). The chain is Orotate phosphoribosyltransferase from Xanthomonas oryzae pv. oryzae (strain MAFF 311018).